We begin with the raw amino-acid sequence, 39 residues long: Photosystem II reaction center protein J (39 aa).

The helical transmembrane segment at 9 to 29 (LWLVGLVGGFAVITIVSLFIY) threads the bilayer.

Belongs to the PsbJ family. In terms of assembly, PSII is composed of 1 copy each of membrane proteins PsbA, PsbB, PsbC, PsbD, PsbE, PsbF, PsbH, PsbI, PsbJ, PsbK, PsbL, PsbM, PsbT, PsbX, PsbY, PsbZ, Psb30/Ycf12, at least 3 peripheral proteins of the oxygen-evolving complex and a large number of cofactors. It forms dimeric complexes.

It is found in the plastid. It localises to the chloroplast thylakoid membrane. Functionally, one of the components of the core complex of photosystem II (PSII). PSII is a light-driven water:plastoquinone oxidoreductase that uses light energy to abstract electrons from H(2)O, generating O(2) and a proton gradient subsequently used for ATP formation. It consists of a core antenna complex that captures photons, and an electron transfer chain that converts photonic excitation into a charge separation. The polypeptide is Photosystem II reaction center protein J (Thalassiosira pseudonana (Marine diatom)).